The sequence spans 623 residues: Chaperone protein DnaK (623 aa).

Residue Thr-174 is modified to Phosphothreonine; by autocatalysis. Disordered regions lie at residues 470 to 504 (ITIKSSSGLSDEEIKKMQKDAEEHAEEDKKRKEEV) and 578 to 623 (GGAQ…DPDK). The span at 481–504 (EEIKKMQKDAEEHAEEDKKRKEEV) shows a compositional bias: basic and acidic residues. Residues 578–604 (GGAQGAAGQAGPQGAQGGQPNNDNGSS) show a composition bias toward low complexity. The segment covering 614–623 (GDFHKVDPDK) has biased composition (basic and acidic residues).

It belongs to the heat shock protein 70 family.

In terms of biological role, acts as a chaperone. This chain is Chaperone protein DnaK, found in Lactobacillus gasseri (strain ATCC 33323 / DSM 20243 / BCRC 14619 / CIP 102991 / JCM 1131 / KCTC 3163 / NCIMB 11718 / NCTC 13722 / AM63).